A 150-amino-acid polypeptide reads, in one-letter code: C-type lectin 37Db (150 aa).

Positions 1–20 are cleaved as a signal peptide; the sequence is MMVKLLLLFLVCWSALPLES. The 118-residue stretch at 31–148 folds into the C-type lectin domain; sequence IGEKQYYISL…CYSSVAFICQ (118 aa). Cystine bridges form between C52/C147 and C122/C139. N107 and N115 each carry an N-linked (GlcNAc...) asparagine glycan.

Its subcellular location is the secreted. Its function is as follows. Galactose-specific lectin that displays calcium-dependent activity. Binds to the surface of hemocytes and enhances hemocyte encapsulation and melanization. This is likely by interacting with carbohydrates on the surface of the hemocytes. Also displays agglutination activity against the Gram-negative bacterium E.coli. This is C-type lectin 37Db from Drosophila melanogaster (Fruit fly).